A 181-amino-acid chain; its full sequence is K99 fimbrial protein (181 aa).

Residues 1-22 form the signal peptide; that stretch reads MKKTLLAIILGGMAFATTNASA. A disulfide bridge links Cys38 with Cys79.

It belongs to the fimbrial protein family.

It is found in the fimbrium. Its function is as follows. Fimbriae (also called pili), polar filaments radiating from the surface of the bacterium to a length of 0.5-1.5 micrometers and numbering 100-300 per cell, enable bacteria to colonize the epithelium of specific host organs. FanC is the main component of the K99 fimbriae. The polypeptide is K99 fimbrial protein (fanC) (Escherichia coli).